Here is a 259-residue protein sequence, read N- to C-terminus: Phosphatidylglycerol--prolipoprotein diacylglyceryl transferase (259 aa).

A run of 4 helical transmembrane segments spans residues 12–32, 46–66, 83–103, and 109–129; these read LSLH…VYLA, IIDF…IYYV, IWNG…VLFV, and VLNP…AQAI. Residue arginine 131 participates in a 1,2-diacyl-sn-glycero-3-phospho-(1'-sn-glycerol) binding. 3 helical membrane passes run 167-187, 194-214, and 226-246; these read VPTF…IMVW, LLDG…RLVI, and GIRV…VFIF.

It belongs to the Lgt family.

It is found in the cell membrane. It carries out the reaction L-cysteinyl-[prolipoprotein] + a 1,2-diacyl-sn-glycero-3-phospho-(1'-sn-glycerol) = an S-1,2-diacyl-sn-glyceryl-L-cysteinyl-[prolipoprotein] + sn-glycerol 1-phosphate + H(+). Its pathway is protein modification; lipoprotein biosynthesis (diacylglyceryl transfer). In terms of biological role, catalyzes the transfer of the diacylglyceryl group from phosphatidylglycerol to the sulfhydryl group of the N-terminal cysteine of a prolipoprotein, the first step in the formation of mature lipoproteins. This Streptococcus equi subsp. zooepidemicus (strain MGCS10565) protein is Phosphatidylglycerol--prolipoprotein diacylglyceryl transferase.